A 473-amino-acid chain; its full sequence is GTPase Der (473 aa).

2 consecutive EngA-type G domains span residues Leu-3–Lys-167 and Ile-204–Asn-379. GTP-binding positions include Gly-9–Ser-16, Asp-56–Leu-60, Asn-119–Glu-122, Gly-210–Ser-217, Asp-257–Leu-261, and Asn-322–Asp-325. Residues Arg-380–Asp-464 enclose the KH-like domain.

It belongs to the TRAFAC class TrmE-Era-EngA-EngB-Septin-like GTPase superfamily. EngA (Der) GTPase family. As to quaternary structure, associates with the 50S ribosomal subunit.

In terms of biological role, GTPase that plays an essential role in the late steps of ribosome biogenesis. The sequence is that of GTPase Der from Bartonella bacilliformis (strain ATCC 35685 / KC583 / Herrer 020/F12,63).